Here is a 249-residue protein sequence, read N- to C-terminus: Type III pantothenate kinase (249 aa).

6–13 contributes to the ATP binding site; sequence DCGNSFIK. Substrate-binding positions include Tyr93 and 100 to 103; that span reads GMDR. Residue Asp102 is the Proton acceptor of the active site. Asp122 provides a ligand contact to K(+). Thr125 is an ATP binding site. Thr181 provides a ligand contact to substrate.

It belongs to the type III pantothenate kinase family. In terms of assembly, homodimer. It depends on NH4(+) as a cofactor. The cofactor is K(+).

Its subcellular location is the cytoplasm. It carries out the reaction (R)-pantothenate + ATP = (R)-4'-phosphopantothenate + ADP + H(+). It participates in cofactor biosynthesis; coenzyme A biosynthesis; CoA from (R)-pantothenate: step 1/5. Its function is as follows. Catalyzes the phosphorylation of pantothenate (Pan), the first step in CoA biosynthesis. This chain is Type III pantothenate kinase, found in Pseudomonas putida (strain ATCC 700007 / DSM 6899 / JCM 31910 / BCRC 17059 / LMG 24140 / F1).